Here is a 160-residue protein sequence, read N- to C-terminus: Transcription antitermination protein NusB (160 aa).

It belongs to the NusB family.

Functionally, involved in transcription antitermination. Required for transcription of ribosomal RNA (rRNA) genes. Binds specifically to the boxA antiterminator sequence of the ribosomal RNA (rrn) operons. The sequence is that of Transcription antitermination protein NusB from Rhizobium rhizogenes (strain K84 / ATCC BAA-868) (Agrobacterium radiobacter).